The chain runs to 239 residues: UDP-2,3-diacylglucosamine hydrolase (239 aa).

5 residues coordinate Mn(2+): aspartate 8, histidine 10, aspartate 41, asparagine 79, and histidine 114. 79-80 lines the substrate pocket; the sequence is NR. Substrate is bound by residues aspartate 122, serine 160, asparagine 164, lysine 167, and histidine 195. Histidine 195 and histidine 197 together coordinate Mn(2+).

This sequence belongs to the LpxH family. Requires Mn(2+) as cofactor.

It is found in the cell inner membrane. It catalyses the reaction UDP-2-N,3-O-bis[(3R)-3-hydroxytetradecanoyl]-alpha-D-glucosamine + H2O = 2-N,3-O-bis[(3R)-3-hydroxytetradecanoyl]-alpha-D-glucosaminyl 1-phosphate + UMP + 2 H(+). The protein operates within glycolipid biosynthesis; lipid IV(A) biosynthesis; lipid IV(A) from (3R)-3-hydroxytetradecanoyl-[acyl-carrier-protein] and UDP-N-acetyl-alpha-D-glucosamine: step 4/6. Hydrolyzes the pyrophosphate bond of UDP-2,3-diacylglucosamine to yield 2,3-diacylglucosamine 1-phosphate (lipid X) and UMP by catalyzing the attack of water at the alpha-P atom. Involved in the biosynthesis of lipid A, a phosphorylated glycolipid that anchors the lipopolysaccharide to the outer membrane of the cell. The sequence is that of UDP-2,3-diacylglucosamine hydrolase from Sodalis glossinidius (strain morsitans).